A 508-amino-acid polypeptide reads, in one-letter code: Steroid 17-alpha-hydroxylase/17,20 lyase (508 aa).

Asparagine 202 is a substrate binding site. Heme is bound at residue cysteine 442.

Belongs to the cytochrome P450 family. Requires heme as cofactor.

The protein localises to the endoplasmic reticulum membrane. It is found in the microsome membrane. It catalyses the reaction a C21-steroid + reduced [NADPH--hemoprotein reductase] + O2 = a 17alpha-hydroxy-C21-steroid + oxidized [NADPH--hemoprotein reductase] + H2O + H(+). The enzyme catalyses progesterone + reduced [NADPH--hemoprotein reductase] + O2 = 17alpha-hydroxyprogesterone + oxidized [NADPH--hemoprotein reductase] + H2O + H(+). The catalysed reaction is pregnenolone + reduced [NADPH--hemoprotein reductase] + O2 = 17alpha-hydroxypregnenolone + oxidized [NADPH--hemoprotein reductase] + H2O + H(+). It carries out the reaction 17alpha-hydroxyprogesterone + reduced [NADPH--hemoprotein reductase] + O2 = androst-4-ene-3,17-dione + acetate + oxidized [NADPH--hemoprotein reductase] + H2O + 2 H(+). It catalyses the reaction 17alpha-hydroxyprogesterone + reduced [NADPH--hemoprotein reductase] + O2 = 16alpha,17alpha-dihydroxyprogesterone + oxidized [NADPH--hemoprotein reductase] + H2O + H(+). The enzyme catalyses 16alpha,17alpha-dihydroxyprogesterone + reduced [NADPH--hemoprotein reductase] + O2 = 6beta,16alpha,17alpha-trihydroxyprogesterone + oxidized [NADPH--hemoprotein reductase] + H2O + H(+). The catalysed reaction is 17alpha-hydroxypregnenolone + reduced [NADPH--hemoprotein reductase] + O2 = 3beta-hydroxyandrost-5-en-17-one + acetate + oxidized [NADPH--hemoprotein reductase] + H2O + 2 H(+). It carries out the reaction 16alpha,17alpha-dihydroxypregnenolone + reduced [NADPH--hemoprotein reductase] + O2 = 3beta,16alpha-dihydroxy-androst-5-en-17-one + acetate + oxidized [NADPH--hemoprotein reductase] + H2O + 2 H(+). It catalyses the reaction 3beta-hydroxyandrost-5-en-17-one + reduced [NADPH--hemoprotein reductase] + O2 = 3beta,16alpha-dihydroxy-androst-5-en-17-one + oxidized [NADPH--hemoprotein reductase] + H2O + H(+). The enzyme catalyses androst-4-ene-3,17-dione + reduced [NADPH--hemoprotein reductase] + O2 = 16alpha-hydroxyandrost-4-ene-3,17-dione + oxidized [NADPH--hemoprotein reductase] + H2O + H(+). The protein operates within steroid hormone biosynthesis. It participates in steroid biosynthesis; glucocorticoid biosynthesis. Regulated predominantly by intracellular cAMP levels. The 17,20-lyase activity is stimulated by cytochrome b5, which acts as an allosteric effector increasing the Vmax of the lyase activity. A cytochrome P450 monooxygenase involved in corticoid and androgen biosynthesis. Catalyzes 17-alpha hydroxylation of C21 steroids, which is common for both pathways. A second oxidative step, required only for androgen synthesis, involves an acyl-carbon cleavage. The 17-alpha hydroxy intermediates, as part of adrenal glucocorticoids biosynthesis pathway, are precursors of cortisol. Hydroxylates steroid hormones, pregnenolone and progesterone to form 17-alpha hydroxy metabolites, followed by the cleavage of the C17-C20 bond to form C19 steroids, dehydroepiandrosterone (DHEA) and androstenedione. Has 16-alpha hydroxylase activity. Catalyzes 16-alpha hydroxylation of 17-alpha hydroxy pregnenolone, followed by the cleavage of the C17-C20 bond to form 16-alpha-hydroxy DHEA. Also 16-alpha hydroxylates androgens, relevant for estriol synthesis. Mechanistically, uses molecular oxygen inserting one oxygen atom into a substrate, and reducing the second into a water molecule, with two electrons provided by NADPH via cytochrome P450 reductase (CPR; NADPH-ferrihemoprotein reductase). The protein is Steroid 17-alpha-hydroxylase/17,20 lyase (CYP17A1) of Macaca fascicularis (Crab-eating macaque).